We begin with the raw amino-acid sequence, 125 residues long: Small ribosomal subunit protein uS13 (125 aa).

The interval 93-125 (RAGLPVRGQRTRTNARTRRGARKTVAGKKKATR) is disordered. The span at 101-125 (QRTRTNARTRRGARKTVAGKKKATR) shows a compositional bias: basic residues.

It belongs to the universal ribosomal protein uS13 family. As to quaternary structure, part of the 30S ribosomal subunit. Forms a loose heterodimer with protein S19. Forms two bridges to the 50S subunit in the 70S ribosome.

In terms of biological role, located at the top of the head of the 30S subunit, it contacts several helices of the 16S rRNA. In the 70S ribosome it contacts the 23S rRNA (bridge B1a) and protein L5 of the 50S subunit (bridge B1b), connecting the 2 subunits; these bridges are implicated in subunit movement. Contacts the tRNAs in the A and P-sites. This chain is Small ribosomal subunit protein uS13, found in Synechococcus elongatus (strain ATCC 33912 / PCC 7942 / FACHB-805) (Anacystis nidulans R2).